The chain runs to 1368 residues: MQYSFTEKKRIRKSFAKRPIVHQVPFLLATQLESFSTFLQADVPATQRKPEGLQAAFTSVFPIVSHNGFARLEFVSYALSSPAFNIKECQQRGLTYCSALRAKVRLVILDKESPNKPVVKEVKEQEVYMGEIPLMTPTGSFVINGTERVIVSQLHRSPGVFFEHDKGKTHSSGKLLFSARIIPYRGSWLDFEFDPKDILYFRVDRRRKMPVTILLKAIGLTPEQILANFFVFDNFTLMDEGAQLEFVPERLRGEVARFDITDRDGKVIVQKDKRINAKHIRDLEAAKTKFISVPEDYLLGRVLAKNVVDGDTGEVIASANDEVTESVLEKLREAGIKDIQTLYTNDLDQGPYISSTLRVDETTDKTAARIAIYRMMRPGEPPTEEAVEALFNRLFYSEEAYDLSKVGRMKFNRRVGRDEIVGPMTLQDDDILATIKILVELRNGKGEVDDIDHLGNRRVRCVGELAENQFRAGLVRVERAVKERLGQAESENLMPHDLINSKPISSAIREFFGSSQLSQFMDQTNPLSEITHKRRVSALGPGGLTRERAGFEVRDVHPTHYGRVCPIETPEGPNIGLINSLALYAHLNEYGFLETPYRKVVDSKVTDQIDYLSAIEEGRYMIAQANAAIDENGQLIDELVSSREAGETMMVTPDRIQYMDVAPSQIVSVAASLIPFLEHDDANRALMGSNMQRQAVPCLRPEKPVVGTGIERTCAVDSGTTVQAFRGGVVDYVDAGRIVIRVNDDEAVAGEVGVDIYNLIKYTRSNQNTNINQRPIVKMGDKVSRGDVLADGASTDLGELALGQNMLIAFMPWNGYNFEDSILISEKVVADDRYTSIHIEELNVVARDTKLGPEEITRDISNLAEVQLGRLDESGIVYIGAEVEAGDVLVGKVTPKGETQLTPEEKLLRAIFGEKASDVKDTSLRVPSGMSGTVIDVQVFTREGIQRDKRAQQIIDDELKRYRLDLNDQLRIVEGDAFQRLARMLVGKVANGGPKKLAKGTKIDQAYLEDLDHYHWFDIRLADDEAAAQLEAIKNSIEEKRHQFDLAFEEKRKKLTQGDELPPGVLKMVKVYLAVKRRLQPGDKMAGRHGNKGVVSKIVPIEDMPYMADGRPADVVLNPLGVPSRMNVGQVLEVHLGWAAKGLGWRIGEMLQRQAKIEELRTFLTKIYNESGRQEDLESFTDDEILELAKNLREGVPFATPVFDGATEEEMGKMLDLAFPDDIAEQLGMNPSKNQVRLYDGRTGEMFERRVTLGYMHYLKLHHLVDDKMHARSTGPYSLVTQQPLGGKAQFGGQRFGEMEVWALEAYGASYVLQEMLTVKSDDVTGRTKVYENLVKGDHVIDAGMPESFNVLVKEIRSLGIDIDLDRN.

It belongs to the RNA polymerase beta chain family. As to quaternary structure, the RNAP catalytic core consists of 2 alpha, 1 beta, 1 beta' and 1 omega subunit. When a sigma factor is associated with the core the holoenzyme is formed, which can initiate transcription.

It catalyses the reaction RNA(n) + a ribonucleoside 5'-triphosphate = RNA(n+1) + diphosphate. DNA-dependent RNA polymerase catalyzes the transcription of DNA into RNA using the four ribonucleoside triphosphates as substrates. The protein is DNA-directed RNA polymerase subunit beta of Burkholderia cenocepacia (strain HI2424).